We begin with the raw amino-acid sequence, 150 residues long: Large ribosomal subunit protein bL9 (150 aa).

Belongs to the bacterial ribosomal protein bL9 family.

Functionally, binds to the 23S rRNA. The protein is Large ribosomal subunit protein bL9 of Wolinella succinogenes (strain ATCC 29543 / DSM 1740 / CCUG 13145 / JCM 31913 / LMG 7466 / NCTC 11488 / FDC 602W) (Vibrio succinogenes).